The following is a 419-amino-acid chain: eIF5-mimic protein 1 (419 aa).

The disordered stretch occupies residues 1–22; that stretch reads MNKHQKPVLTGQRFKTRKRDEK. The residue at position 117 (Lys-117) is an N6-acetyllysine. Residues 248-415 enclose the W2 domain; it reads VQQSLGTRKE…QNAEEESESE (168 aa). 2 positions are modified to phosphoserine: Ser-412 and Ser-414.

It belongs to the BZW family. Interacts with EIF3E. Interacts with EIF2S2. Interacts with EIF3C.

It is found in the cytoplasm. Its function is as follows. Translation initiation regulator which represses non-AUG initiated translation and repeat-associated non-AUG (RAN) initiated translation by acting as a competitive inhibitor of eukaryotic translation initiation factor 5 (EIF5) function. Increases the accuracy of translation initiation by impeding EIF5-dependent translation from non-AUG codons by competing with it for interaction with EIF2S2 within the 43S pre-initiation complex (PIC) in an EIF3C-binding dependent manner. This chain is eIF5-mimic protein 1 (BZW2), found in Homo sapiens (Human).